The sequence spans 215 residues: Pentapeptide repeat protein QnrB4 (215 aa).

Pentapeptide repeat domains are found at residues 25–104 (TFFN…SFMN) and 117–191 (ITNT…RGVD).

Belongs to the pentapeptide repeat protein family.

Functionally, probably plays a role in resistance to quinolone antibiotics. Only inhibits ATP-dependent DNA supercoiling by E.coli gyrase at high concentration (30 uM). Protects E.coli gyrase supercoiling activity from inhibition by fluoroquinolones (ciprofloxacin) at 0.1 uM, does not protect M.tuberculosis gyrase activity. The protein is Pentapeptide repeat protein QnrB4 of Escherichia coli.